A 412-amino-acid polypeptide reads, in one-letter code: Proline-rich protein 30 (412 aa).

2 stretches are compositionally biased toward polar residues: residues 1–15 (MLPQ…QTSV) and 23–39 (GFSQ…QPLS). Disordered regions lie at residues 1–88 (MLPQ…HPYS), 123–174 (PLTP…SNRQ), and 317–412 (RPKE…KSSV). Composition is skewed to low complexity over residues 50 to 59 (PFSSTQSRRP), 126 to 142 (PSFS…PHSP), and 334 to 350 (QLPA…ADPV). Polar residues predominate over residues 353–372 (TPSQTRSFRSAGLQSPNSPR).

This is Proline-rich protein 30 (PRR30) from Homo sapiens (Human).